Reading from the N-terminus, the 435-residue chain is Mitochondrial association factor 1 form a1 (435 aa).

A signal peptide spans 1–20 (MWRIWRCRLSFLFATGCLLG). The Vacuolar portion of the chain corresponds to 21–96 (ALTAGLGSQM…VTARRRRNRR (76 aa)). The chain crosses the membrane as a helical span at residues 97 to 117 (IALIATAVGVAVILAALYVLR). At 118–435 (RRRAQPPQEP…ERTYTFPQGD (318 aa)) the chain is on the cytoplasmic side. Residues 120 to 159 (RAQPPQEPEPPTRLRTPRPRAPSGQQQPSESEPPAGVPMT) form a disordered region.

As to quaternary structure, interacts with host SAMM50.

It localises to the parasitophorous vacuole membrane. During host cell infection by tachyzoites, does not play a role in tethering the parasitophorous vacuole to the host mitochondria, probably because it does not bind host mitochondrial import protein TOMM70. This is Mitochondrial association factor 1 form a1 from Toxoplasma gondii (strain ATCC 50611 / Me49).